The sequence spans 485 residues: Glutamate--tRNA ligase (485 aa).

The short motif at 11–21 is the 'HIGH' region element; that stretch reads PSPTGLLHIGN. The short motif at 255 to 259 is the 'KMSKS' region element; the sequence is KLSKR. Lys-258 provides a ligand contact to ATP.

This sequence belongs to the class-I aminoacyl-tRNA synthetase family. Glutamate--tRNA ligase type 1 subfamily. As to quaternary structure, monomer.

The protein localises to the cytoplasm. It catalyses the reaction tRNA(Glu) + L-glutamate + ATP = L-glutamyl-tRNA(Glu) + AMP + diphosphate. In terms of biological role, catalyzes the attachment of glutamate to tRNA(Glu) in a two-step reaction: glutamate is first activated by ATP to form Glu-AMP and then transferred to the acceptor end of tRNA(Glu). In Streptococcus sanguinis (strain SK36), this protein is Glutamate--tRNA ligase.